The following is a 709-amino-acid chain: Twinkle homolog protein, chloroplastic/mitochondrial (709 aa).

A chloroplast and mitochondrion-targeting transit peptide spans 1 to 16; it reads MRFLLRLPQIHFRKLS. The Toprim domain maps to 280-385; sequence SEVIIVEGEI…KKSEDEHFKD (106 aa). The Mg(2+) site is built by E286, D348, and D350. In terms of domain architecture, SF4 helicase spans 430-698; sequence THGHEYGVST…GSYSDSPVTP (269 aa). 460-467 provides a ligand contact to ATP; it reads GIPNSGKS.

It depends on Mg(2+) as a cofactor. In terms of tissue distribution, expressed in young leaves and shoot apex tissues. Detected in developing tissues such as cotyledons, sepals, pistils and inflorescences. Nearly undetectable in mature leaves.

Its subcellular location is the plastid. It is found in the chloroplast. The protein localises to the mitochondrion. It carries out the reaction ATP + H2O = ADP + phosphate + H(+). Functionally, has both DNA primase and DNA helicase activities and may be involved in organelle DNA replication. Capable of producing RNA primers of 9 to 18 bases from a single-stranded DNA template. The sequence is that of Twinkle homolog protein, chloroplastic/mitochondrial from Arabidopsis thaliana (Mouse-ear cress).